A 176-amino-acid polypeptide reads, in one-letter code: MSRVGKSPIALQGAEVKLADGAITVKGPLGTITQAINPLVNVANNDGTLNLSPVDESREANALSGTMRAIIANAVQGVTKGFERKLTLVGVGYRAQAQGDKLNLSLGFSHPVVHQMPEGVKAETPTQTEIVIKGINKQQVGQVAAEVRGYRPPEPYKGKGVRYSDEVVILKETKKK.

The protein belongs to the universal ribosomal protein uL6 family. In terms of assembly, part of the 50S ribosomal subunit.

This protein binds to the 23S rRNA, and is important in its secondary structure. It is located near the subunit interface in the base of the L7/L12 stalk, and near the tRNA binding site of the peptidyltransferase center. This is Large ribosomal subunit protein uL6 from Burkholderia ambifaria (strain ATCC BAA-244 / DSM 16087 / CCUG 44356 / LMG 19182 / AMMD) (Burkholderia cepacia (strain AMMD)).